The primary structure comprises 392 residues: Selenide, water dikinase 1 (392 aa).

The active site involves Cys31. ATP-binding positions include Lys32, 67–69, Asp87, Asp110, and 161–164; these read GMD and GGQT. Residue Asp69 participates in Mg(2+) binding. Residue Asp110 coordinates Mg(2+). Mg(2+) is bound at residue Asp265.

Belongs to the selenophosphate synthase 1 family. Class II subfamily. Homodimer. Requires Mg(2+) as cofactor.

It localises to the cell membrane. Its subcellular location is the nucleus membrane. The catalysed reaction is hydrogenselenide + ATP + H2O = selenophosphate + AMP + phosphate + 2 H(+). Synthesizes selenophosphate from selenide and ATP. The protein is Selenide, water dikinase 1 (sephs1) of Xenopus laevis (African clawed frog).